The chain runs to 455 residues: UDP-glycosyltransferase 87A2 (455 aa).

Met1 carries the N-acetylmethionine modification. Residues Ser278, 327 to 329, 344 to 352, and 366 to 369 contribute to the UDP-alpha-D-glucose site; these read CDQ, HCGFNSTLE, and FWDQ.

Belongs to the UDP-glycosyltransferase family.

This Arabidopsis thaliana (Mouse-ear cress) protein is UDP-glycosyltransferase 87A2 (UGT87A2).